We begin with the raw amino-acid sequence, 51 residues long: MARYRCCLTHSGSRCRRRRRRRCRRRRRRFGRRRRRRVCCRRYTVIRCTRQ.

2 disulfide bridges follow: Cys-7/Cys-15 and Cys-40/Cys-48.

It belongs to the protamine P1 family. In terms of assembly, cross-linked by interchain disulfide bonds around the DNA-helix. Phosphorylated by SRPK1. Testis.

It localises to the nucleus. The protein localises to the chromosome. Its function is as follows. Protamines substitute for histones in the chromatin of sperm during the haploid phase of spermatogenesis. They compact sperm DNA into a highly condensed, stable and inactive complex. The polypeptide is Sperm protamine P1 (PRM1) (Bos taurus (Bovine)).